The chain runs to 262 residues: 1,2-epoxyphenylacetyl-CoA isomerase (262 aa).

The protein belongs to the enoyl-CoA hydratase/isomerase family.

The catalysed reaction is 2-(1,2-epoxy-1,2-dihydrophenyl)acetyl-CoA = 2-oxepin-2(3H)-ylideneacetyl-CoA. It participates in aromatic compound metabolism; phenylacetate degradation. Catalyzes the reversible conversion of the epoxide to 2-oxepin-2(3H)-ylideneacetyl-CoA (oxepin-CoA). This is 1,2-epoxyphenylacetyl-CoA isomerase (paaG) from Escherichia coli (strain K12).